The sequence spans 57 residues: Small ribosomal subunit protein eS27 (57 aa).

Residues Cys-10, Cys-13, Cys-29, and Cys-32 each contribute to the Zn(2+) site. The C4-type zinc-finger motif lies at 10–32 (CPDCENEQSLFEKAASEVSCAVC).

This sequence belongs to the eukaryotic ribosomal protein eS27 family. Part of the 30S ribosomal subunit. Zn(2+) is required as a cofactor.

The chain is Small ribosomal subunit protein eS27 from Haloarcula marismortui (strain ATCC 43049 / DSM 3752 / JCM 8966 / VKM B-1809) (Halobacterium marismortui).